We begin with the raw amino-acid sequence, 210 residues long: Thiamine-phosphate synthase (210 aa).

4-amino-2-methyl-5-(diphosphooxymethyl)pyrimidine is bound by residues 36-40 and Asn-68; that span reads QLRIK. Mg(2+) is bound by residues Asp-69 and Asp-88. Ser-107 provides a ligand contact to 4-amino-2-methyl-5-(diphosphooxymethyl)pyrimidine. 133-135 provides a ligand contact to 2-[(2R,5Z)-2-carboxy-4-methylthiazol-5(2H)-ylidene]ethyl phosphate; the sequence is TQT. 4-amino-2-methyl-5-(diphosphooxymethyl)pyrimidine is bound at residue Lys-136. 2-[(2R,5Z)-2-carboxy-4-methylthiazol-5(2H)-ylidene]ethyl phosphate contacts are provided by residues Gly-165 and 185 to 186; that span reads VS.

The protein belongs to the thiamine-phosphate synthase family. Mg(2+) serves as cofactor.

The enzyme catalyses 2-[(2R,5Z)-2-carboxy-4-methylthiazol-5(2H)-ylidene]ethyl phosphate + 4-amino-2-methyl-5-(diphosphooxymethyl)pyrimidine + 2 H(+) = thiamine phosphate + CO2 + diphosphate. The catalysed reaction is 2-(2-carboxy-4-methylthiazol-5-yl)ethyl phosphate + 4-amino-2-methyl-5-(diphosphooxymethyl)pyrimidine + 2 H(+) = thiamine phosphate + CO2 + diphosphate. It carries out the reaction 4-methyl-5-(2-phosphooxyethyl)-thiazole + 4-amino-2-methyl-5-(diphosphooxymethyl)pyrimidine + H(+) = thiamine phosphate + diphosphate. It functions in the pathway cofactor biosynthesis; thiamine diphosphate biosynthesis; thiamine phosphate from 4-amino-2-methyl-5-diphosphomethylpyrimidine and 4-methyl-5-(2-phosphoethyl)-thiazole: step 1/1. In terms of biological role, condenses 4-methyl-5-(beta-hydroxyethyl)thiazole monophosphate (THZ-P) and 2-methyl-4-amino-5-hydroxymethyl pyrimidine pyrophosphate (HMP-PP) to form thiamine monophosphate (TMP). This chain is Thiamine-phosphate synthase, found in Cronobacter sakazakii (strain ATCC BAA-894) (Enterobacter sakazakii).